A 354-amino-acid polypeptide reads, in one-letter code: UDP-galactose transporter homolog 1 (354 aa).

The next 5 helical transmembrane spans lie at 6 to 26 (GGSI…FLTW), 54 to 74 (LVIN…YSVV), 95 to 112 (FFKS…SSPL), 123 to 143 (LAYL…HFVL), and 148 to 168 (FPLY…IFTL). The N-linked (GlcNAc...) asparagine glycan is linked to asparagine 202. A run of 4 helical transmembrane segments spans residues 227 to 247 (YLMC…ALIF), 268 to 288 (MNIL…FIIL), 295 to 317 (ILIT…LFGH), and 321 to 340 (GLQW…EALV).

This sequence belongs to the nucleotide-sugar transporter family. SLC35B subfamily.

The protein resides in the endoplasmic reticulum membrane. In terms of biological role, may be involved in specific transport of UDP-Gal from the cytosol to the Golgi lumen. Involved in the maintenance of optimal conditions for the folding of secretory pathway proteins in the endoplasmic reticulum. In Debaryomyces hansenii (strain ATCC 36239 / CBS 767 / BCRC 21394 / JCM 1990 / NBRC 0083 / IGC 2968) (Yeast), this protein is UDP-galactose transporter homolog 1 (HUT1).